A 667-amino-acid polypeptide reads, in one-letter code: Protein adenylyltransferase SelO, mitochondrial (667 aa).

The N-terminal 6 residues, 1-6, are a transit peptide targeting the mitochondrion; that stretch reads MASVRA. ATP is bound by residues Gly-154, Gly-156, Lys-177, Asp-189, Gly-190, Arg-247, and Arg-254. Catalysis depends on Asp-341, which acts as the Proton acceptor. Positions 342 and 351 each coordinate Mg(2+). ATP is bound at residue Asp-351. Residues 628–652 form a disordered region; sequence YHSEEEATGPEAVARSTEEQSSYSN. Thr-635 is modified (phosphothreonine). Ser-651 is modified (phosphoserine). Position 665 (Sec-665) is a non-standard amino acid, selenocysteine.

The protein belongs to the SELO family. Mg(2+) serves as cofactor.

It is found in the mitochondrion. The enzyme catalyses L-tyrosyl-[protein] + ATP = O-(5'-adenylyl)-L-tyrosyl-[protein] + diphosphate. It carries out the reaction L-threonyl-[protein] + ATP = 3-O-(5'-adenylyl)-L-threonyl-[protein] + diphosphate. It catalyses the reaction L-seryl-[protein] + ATP = 3-O-(5'-adenylyl)-L-seryl-[protein] + diphosphate. Catalyzes the transfer of adenosine 5'-monophosphate (AMP) to Ser, Thr and Tyr residues of target proteins (AMPylation). May be a redox-active mitochondrial selenoprotein which interacts with a redox target protein. This Mus musculus (Mouse) protein is Protein adenylyltransferase SelO, mitochondrial.